A 158-amino-acid chain; its full sequence is NAD(P)H-quinone oxidoreductase subunit N (158 aa).

This sequence belongs to the complex I NdhN subunit family. As to quaternary structure, NDH-1 can be composed of about 15 different subunits; different subcomplexes with different compositions have been identified which probably have different functions.

The protein resides in the cellular thylakoid membrane. It carries out the reaction a plastoquinone + NADH + (n+1) H(+)(in) = a plastoquinol + NAD(+) + n H(+)(out). The enzyme catalyses a plastoquinone + NADPH + (n+1) H(+)(in) = a plastoquinol + NADP(+) + n H(+)(out). Its function is as follows. NDH-1 shuttles electrons from an unknown electron donor, via FMN and iron-sulfur (Fe-S) centers, to quinones in the respiratory and/or the photosynthetic chain. The immediate electron acceptor for the enzyme in this species is believed to be plastoquinone. Couples the redox reaction to proton translocation, and thus conserves the redox energy in a proton gradient. Cyanobacterial NDH-1 also plays a role in inorganic carbon-concentration. In Prochlorococcus marinus (strain AS9601), this protein is NAD(P)H-quinone oxidoreductase subunit N.